Reading from the N-terminus, the 251-residue chain is Large ribosomal subunit protein uL2 (251 aa).

The segment covering 1–12 (MGKRLRVQRHGR) has biased composition (basic residues). The disordered stretch occupies residues 1-22 (MGKRLRVQRHGRGTPQWRNRGH).

It belongs to the universal ribosomal protein uL2 family. Part of the 50S ribosomal subunit. Forms a bridge to the 30S subunit in the 70S ribosome.

Functionally, one of the primary rRNA binding proteins. Required for association of the 30S and 50S subunits to form the 70S ribosome, for tRNA binding and peptide bond formation. It has been suggested to have peptidyltransferase activity; this is somewhat controversial. Makes several contacts with the 16S rRNA in the 70S ribosome. The chain is Large ribosomal subunit protein uL2 from Ignicoccus hospitalis (strain KIN4/I / DSM 18386 / JCM 14125).